The sequence spans 659 residues: Pro-secreted protein ORF2 (659 aa).

The N-terminal stretch at 1–23 (MRPRPLLLLFLLFLPMLPAPPTG) is a signal peptide. Disordered stretches follow at residues 19–43 (APPT…GFWG) and 64–107 (PDVA…TAGA). Residues 28–33 (RRRGRR) carry the Nuclear localization signal motif. A compositionally biased stretch (low complexity) spans 92–107 (QRPSAASRRRPATAGA). N-linked (GlcNAc...) asparagine; by host glycosylation is found at Asn137 and Asn310. Residues 367–393 (IALTLLNLADTLLGGLPTELISSAGGQ) are particle formation. The N-linked (GlcNAc...) asparagine; by host glycan is linked to Asn561. The interval 584–609 (TTRLGAGPVAISAAAVLAPRSALALL) is oligomerization.

Belongs to the hepevirus capsid protein family. In terms of assembly, homodimer. Self-assembles to form the capsid. The capsid is dominated by dimers that define the 30 morphological units. Interacts with phosphorylated protein ORF3. Interacts with host TMEM134. Interacts with host ASGR1 and ASGR2; these interactions facilitate infection of host hepatocytes. Post-translationally, cleaved by host protease in the N-terminus. In terms of processing, N-glycosylated. Not N-glycosylated. The C-terminus of the capsid protein ORF2 is truncated in non-enveloped virions shedded in feces, probably due to host proteases.

Its subcellular location is the secreted. It localises to the virion. It is found in the host cytoplasm. The protein resides in the host endoplasmic reticulum. The protein localises to the host Golgi apparatus. Its subcellular location is the host cell surface. It localises to the host nucleus. Its function is as follows. Plays a role in the inhibition of host antibody-mediated neutralization without blocking viral cell entry. Functionally, forms an icosahedral capsid with a T=1 symmetry and a 34 nm diameter. The capsid is composed of 60 copies linked to each other. Binds to the 5' end of the genomic RNA to mediate genome encapsidation. Binds to heparin surface proteoglycans (HSPGs) to mediate viral entry. Additionally, the interactions with host ASGR1 and ASGR2 facilitate viral infection of hepatocytes. Inhibits IFN production by blocking host TBK1-induced IRF3 phosphorylation. The nuclear form probably modulates host gene expression. This Bandicota bengalensis (lesser bandicoot rat) protein is Pro-secreted protein ORF2.